Reading from the N-terminus, the 475-residue chain is Early growth response protein 1-B (475 aa).

Disordered regions lie at residues 109 to 180 (NVSS…TASI) and 264 to 285 (PSRMRKYPNRPSKTPPHERPYA). Residues 111-140 (SSSSAPSSSPSSSSSSSSSSSSQSPPLSCS) are compositionally biased toward low complexity. Positions 170–179 (QPFQNASTAS) are enriched in polar residues. C2H2-type zinc fingers lie at residues 284–308 (YACPVESCDRRFSRSDELTRHIRIH), 314–336 (FQCRICMRNFSRSDHLTTHIRTH), and 342–364 (FACDICGRKFARSDERKRHTKIH). The tract at residues 355-379 (DERKRHTKIHLRQKDKKADKATPVS) is disordered. Positions 359–369 (RHTKIHLRQKD) are enriched in basic residues.

It belongs to the EGR C2H2-type zinc-finger protein family.

It is found in the nucleus. The protein localises to the cytoplasm. Transcriptional regulator. Recognizes and binds to the DNA sequence 5'-GCG(T/G)GGGCG-3'(EGR-site) in the promoter region of target genes. Binds double-stranded target DNA, irrespective of the cytosine methylation status. Regulates the transcription of numerous target genes, and thereby plays an important role in regulating the response to growth factors, DNA damage, and ischemia. Plays a role in the regulation of cell survival, proliferation and cell death. Mediates responses to ischemia and hypoxia; regulates the expression of proteins that are involved in inflammatory processes. Plays a role in regulating the expression of circadian clock genes. The chain is Early growth response protein 1-B (egr1-b) from Xenopus laevis (African clawed frog).